We begin with the raw amino-acid sequence, 397 residues long: MKPISIVAFPIPAISMLLLSAVSQAASMQPPIAKPGETWILQAKRSDEFNVKDATKWNFQTENYGVWSWKNENATVSNGKLKLTTKRESHQRTFWDGCNQQQVANYPLYYTSGVAKSRATGNYGYYEARIKGASTFPGVSPAFWMYSTIDRSLTKEGDVQYSEIDVVELTQKSAVRESDHDLHNIVVKNGKPTWMRPGSFPQTNHNGYHLPFDPRNDFHTYGVNVTKDKITWYVDGEIVGEKDNLYWHRQMNLTLSQGLRAPHTQWKCNQFYPSANKSAEGFPTSMEVDYVRTWVKVGNNNSAPGEGQSCPNTFVAVNSVQLSAAKQTLRKGQSTTLESTVLPNCATNKKVIYSSSNKNVATVNSAGVVKAKNKGTATITVKTKNKGKIDKLTIAVN.

Residues 1 to 25 (MKPISIVAFPIPAISMLLLSAVSQA) form the signal peptide. The 274-residue stretch at 26–299 (ASMQPPIAKP…YVRTWVKVGN (274 aa)) folds into the GH16 domain. Residues Cys98 and Cys268 are joined by a disulfide bond. Catalysis depends on Glu163, which acts as the Nucleophile. Residue Asp165 is part of the active site. Residue Glu168 is the Proton donor of the active site. The 72-residue stretch at 316–387 (AVNSVQLSAA…TITVKTKNKG (72 aa)) folds into the BIG2 domain.

The protein belongs to the glycosyl hydrolase 16 family.

The protein localises to the periplasm. The catalysed reaction is Endohydrolysis of (1-&gt;4)-beta-D-linkages between D-galactose 4-sulfate and 3,6-anhydro-D-galactose in kappa-carrageenans.. This Pseudoalteromonas carrageenovora (Alteromonas carrageenovora) protein is Kappa-carrageenase (cgkA).